Consider the following 234-residue polypeptide: Thrombin-like enzyme acutin (234 aa).

Met1 is a propeptide. Residues 2-225 enclose the Peptidase S1 domain; the sequence is VIGGDECDIN…YTDWIQRNIA (224 aa). 6 disulfide bridges follow: Cys8–Cys140, Cys27–Cys43, Cys75–Cys232, Cys119–Cys186, Cys151–Cys165, and Cys176–Cys201. The N-linked (GlcNAc...) asparagine glycan is linked to Asn21. Residues His42 and Asp87 each act as charge relay system in the active site. Ser180 functions as the Charge relay system in the catalytic mechanism.

Belongs to the peptidase S1 family. Snake venom subfamily. Monomer. In terms of tissue distribution, expressed by the venom gland.

It is found in the secreted. Its function is as follows. Thrombin-like snake venom serine protease. Has arginyl esterase and fibrinogen clotting activities. In Deinagkistrodon acutus (Hundred-pace snake), this protein is Thrombin-like enzyme acutin.